A 205-amino-acid polypeptide reads, in one-letter code: Urease accessory protein UreG (205 aa).

14–21 (GPVGSGKT) lines the GTP pocket.

This sequence belongs to the SIMIBI class G3E GTPase family. UreG subfamily. Homodimer. UreD, UreF and UreG form a complex that acts as a GTP-hydrolysis-dependent molecular chaperone, activating the urease apoprotein by helping to assemble the nickel containing metallocenter of UreC. The UreE protein probably delivers the nickel.

It localises to the cytoplasm. Functionally, facilitates the functional incorporation of the urease nickel metallocenter. This process requires GTP hydrolysis, probably effectuated by UreG. This Proteus mirabilis (strain HI4320) protein is Urease accessory protein UreG.